The primary structure comprises 116 residues: Large ribosomal subunit protein uL18 (116 aa).

It belongs to the universal ribosomal protein uL18 family. As to quaternary structure, part of the 50S ribosomal subunit; part of the 5S rRNA/L5/L18/L25 subcomplex. Contacts the 5S and 23S rRNAs.

Its function is as follows. This is one of the proteins that bind and probably mediate the attachment of the 5S RNA into the large ribosomal subunit, where it forms part of the central protuberance. This chain is Large ribosomal subunit protein uL18, found in Pseudomonas fluorescens (strain ATCC BAA-477 / NRRL B-23932 / Pf-5).